We begin with the raw amino-acid sequence, 202 residues long: uncharacterized protein (202 aa).

This is an uncharacterized protein from Methanocaldococcus jannaschii (strain ATCC 43067 / DSM 2661 / JAL-1 / JCM 10045 / NBRC 100440) (Methanococcus jannaschii).